A 1093-amino-acid chain; its full sequence is Error-prone DNA polymerase (1093 aa).

The segment at 1-55 (MGWFNGPPSWAEMERVLDSKPRRAGESAAPEPDGPLSRGRATYRPPDEGRAARSS) is disordered. Residues 12 to 25 (EMERVLDSKPRRAG) show a composition bias toward basic and acidic residues.

Belongs to the DNA polymerase type-C family. DnaE2 subfamily.

It localises to the cytoplasm. It catalyses the reaction DNA(n) + a 2'-deoxyribonucleoside 5'-triphosphate = DNA(n+1) + diphosphate. In terms of biological role, DNA polymerase involved in damage-induced mutagenesis and translesion synthesis (TLS). It is not the major replicative DNA polymerase. This chain is Error-prone DNA polymerase, found in Mycolicibacterium paratuberculosis (strain ATCC BAA-968 / K-10) (Mycobacterium paratuberculosis).